Here is a 447-residue protein sequence, read N- to C-terminus: Delta(5) fatty acid desaturase fat-4 (447 aa).

Residues 1–80 (MVLREQEHEP…TQEPEIPDIK (80 aa)) form the Cytochrome b5 heme-binding domain. Transmembrane regions (helical) follow at residues 137 to 157 (IFTILFAFYLQYHTYYLPSAI), 257 to 277 (WTFMLPFLRLSWLLQSIIFVS), 292 to 312 (IYEQVGLSLHWAWSLGQLYFL), and 319 to 339 (IMFFLVSHLVGGFLLSHVVTF).

This sequence belongs to the fatty acid desaturase type 1 family.

It localises to the membrane. The catalysed reaction is (11Z,14Z)-eicosadienoyl-CoA + 2 Fe(II)-[cytochrome b5] + O2 + 2 H(+) = (5Z,11Z,14Z)-eicosatrienoyl-CoA + 2 Fe(III)-[cytochrome b5] + 2 H2O. The enzyme catalyses (11Z,14Z,17Z)-eicosatrienoyl-CoA + 2 Fe(II)-[cytochrome b5] + O2 + 2 H(+) = (5Z,11Z,14Z,17Z)-eicosatetraenoyl-CoA + 2 Fe(III)-[cytochrome b5] + 2 H2O. It catalyses the reaction (8Z,11Z,14Z,17Z)-eicosatetraenoyl-CoA + 2 Fe(II)-[cytochrome b5] + O2 + 2 H(+) = (5Z,8Z,11Z,14Z,17Z)-eicosapentaenoyl-CoA + 2 Fe(III)-[cytochrome b5] + 2 H2O. It carries out the reaction (8Z,11Z,14Z)-eicosatrienoyl-CoA + 2 Fe(II)-[cytochrome b5] + O2 + 2 H(+) = (5Z,8Z,11Z,14Z)-eicosatetraenoyl-CoA + 2 Fe(III)-[cytochrome b5] + 2 H2O. The protein operates within lipid metabolism; polyunsaturated fatty acid biosynthesis. Can function as a Delta(5) fatty acid desaturase and behaves as a (8-3) desaturase. Introduces a double bond in the fatty acid chain 5 carbons away from carboxy terminal to biosynthesize polyunsaturated fatty acids (PUFAs) endogenously (PUFAs are essential for membrane structure and many cellular and physiological processes). Acts on a variety of substrates such as dihomo-gamma-linoleoyl-CoA ((8Z,11Z,14Z)-eicosatrienoyl-CoA, 20:3n-6) to generate arachidonoyl-CoA ((5Z,8Z,11Z,14Z)-eicosatetraenoyl-CoA, 20:4n-6). Also acts on a number of other substrates, including fatty acids that do not contain a double bond at the 8 position like (11Z,14Z,17Z)-eicosatrienoyl-CoA (20:3n-3) to produce (5Z,11Z,14Z,17Z)-eicosatetraenoyl-CoA (20:4n-3). Unlike plants, Caenorhabditis elegans desaturases seem to use fatty acyl-CoAs as substrates. This is Delta(5) fatty acid desaturase fat-4 (fat-4) from Caenorhabditis elegans.